The following is a 714-amino-acid chain: MSKQTFTTTFAGKPLVVEVGQVAKQANGATVVRYGESTVLTAAVMSKKMSTGDFFPLQVNYEEKMYAAGKFPGGWMKREGRPSTDATLTARLIDRPIRPMFAEGFRNEVQVINTVLSYDEDASAPMAAMLGSSLALSISDIPFNGPIAGVQVAYVEGEFIINPDKAQQEASLLELTVAGTKDAINMVESGAKELPEAIMLEALLVGHKAIQELIAFQEEIVAAVGKEKAEVELLQVAADLQAEIIETYNADLQQAVQVEEKKAREAATEAVKEQVMAAYEERYAEDEEHDRIMRDVAEILEQMEHAEVRRLITEDKVRPDGRRVDEIRPLAAEIDFLPRVHGSGLFTRGQTQALSVLTLAPMGDTQIIDGLEPEYKKRFLHHYNFPQYSVGETGRYGAAGRREIGHGALGERALAQVLPSLEEFPYAIRLVAEVLESNGSSSQASICAGTLALMAGGVPIKAPVAGIAMGLISDGTNYTVLTDIQGLEDHFGDMDFKVAGTRQGITALQMDIKIEGITPQILEEALAQAKKARFEILDLIEATIAEPRPELAPTAPKIDTIKIDVDKIKVVIGKGGETIDKIIAETGVKIDIDEEGNVSIYSSDQDAINRAKEIIASLVREAKVGEVYHAKVVRIEKFGAFVNLFDKTDALVHISEIAWSRTANVSDVLEIGEEVDVKVIKVDDKGRIDASMKALVPRPPKPEKSEAKKEGKHD.

Asp489 and Asp495 together coordinate Mg(2+). One can recognise a KH domain in the interval 556-615; the sequence is PKIDTIKIDVDKIKVVIGKGGETIDKIIAETGVKIDIDEEGNVSIYSSDQDAINRAKEII. The region spanning 625 to 693 is the S1 motif domain; sequence GEVYHAKVVR…DKGRIDASMK (69 aa). Residues 691 to 714 form a disordered region; that stretch reads SMKALVPRPPKPEKSEAKKEGKHD. Over residues 700–714 the composition is skewed to basic and acidic residues; sequence PKPEKSEAKKEGKHD.

This sequence belongs to the polyribonucleotide nucleotidyltransferase family. Mg(2+) serves as cofactor.

It is found in the cytoplasm. The enzyme catalyses RNA(n+1) + phosphate = RNA(n) + a ribonucleoside 5'-diphosphate. Involved in mRNA degradation. Catalyzes the phosphorolysis of single-stranded polyribonucleotides processively in the 3'- to 5'-direction. The protein is Polyribonucleotide nucleotidyltransferase of Streptococcus equi subsp. zooepidemicus (strain H70).